Consider the following 351-residue polypeptide: tRNA N6-adenosine threonylcarbamoyltransferase (351 aa).

The Fe cation site is built by H124 and H128. Substrate contacts are provided by residues 146–150, D180, G193, D197, and N285; that span reads LVSGG. Residue D313 participates in Fe cation binding.

It belongs to the KAE1 / TsaD family. Requires Fe(2+) as cofactor.

It is found in the cytoplasm. The enzyme catalyses L-threonylcarbamoyladenylate + adenosine(37) in tRNA = N(6)-L-threonylcarbamoyladenosine(37) in tRNA + AMP + H(+). Its function is as follows. Required for the formation of a threonylcarbamoyl group on adenosine at position 37 (t(6)A37) in tRNAs that read codons beginning with adenine. Is involved in the transfer of the threonylcarbamoyl moiety of threonylcarbamoyl-AMP (TC-AMP) to the N6 group of A37, together with TsaE and TsaB. TsaD likely plays a direct catalytic role in this reaction. The sequence is that of tRNA N6-adenosine threonylcarbamoyltransferase from Mycobacterium leprae (strain TN).